We begin with the raw amino-acid sequence, 314 residues long: Olfactory receptor 5I1 (314 aa).

The Extracellular segment spans residues methionine 1–isoleucine 27. An N-linked (GlcNAc...) asparagine glycan is attached at asparagine 7. Residues valine 28 to methionine 48 form a helical membrane-spanning segment. At leucine 49 to histidine 56 the chain is on the cytoplasmic side. The helical transmembrane segment at leucine 57–serine 77 threads the bilayer. Residues aspartate 78–leucine 101 are Extracellular-facing. A disulfide bridge connects residues cysteine 99 and cysteine 191. The chain crosses the membrane as a helical span at residues glutamine 102 to tyrosine 122. Topologically, residues aspartate 123–glycine 141 are cytoplasmic. A helical transmembrane segment spans residues isoleucine 142–threonine 162. At serine 163 to glutamate 198 the chain is on the extracellular side. A helical membrane pass occupies residues tryptophan 199–serine 219. The Cytoplasmic segment spans residues tyrosine 220–threonine 239. A helical membrane pass occupies residues phenylalanine 240–isoleucine 260. At tyrosine 261–aspartate 273 the chain is on the extracellular side. Residues lysine 274–leucine 294 traverse the membrane as a helical segment. Topologically, residues arginine 295–serine 314 are cytoplasmic.

The protein belongs to the G-protein coupled receptor 1 family.

It is found in the cell membrane. Its function is as follows. Odorant receptor. In Homo sapiens (Human), this protein is Olfactory receptor 5I1 (OR5I1).